The sequence spans 352 residues: D-arabitol-phosphate dehydrogenase (352 aa).

Cysteine 43, histidine 65, cysteine 96, cysteine 99, cysteine 102, cysteine 110, and glutamate 151 together coordinate Mn(2+).

The protein belongs to the zinc-containing alcohol dehydrogenase family. In terms of assembly, homotetramer. The cofactor is Mn(2+).

It carries out the reaction D-arabinitol 1-phosphate + NAD(+) = D-xylulose 5-phosphate + NADH + H(+). Inhibited by EDTA, 4-hydroxymercuribenzoic acid (PHMB), mercury and zinc ions at a concentration of 2 mM. Its function is as follows. Involved in the arabitol catabolism via the arabitol phosphate route. Catalyzes only the transformation of D-arabitol 1-phosphate (Arb1P) and D-arabitol 5-phosphate (Arb5P) into D-xylulose 5-phosphate (Xlu5P) and ribulose 5-phosphate, respectively. It can use both NAD and NADP. In Enterococcus avium (Streptococcus avium), this protein is D-arabitol-phosphate dehydrogenase.